The chain runs to 734 residues: MALRFPRFSQGLAQDPTTRRIWFGIATAHDFESHDDITEERLYQNIFASHFGQLAIIFLWTSGNLFHVAWQGNFESWVQDPLHVRPIAHAIWDPHFGQPAVEAFTRGGALGPVNIAYSGVYQWWYTIGLRTNEDLYTGALFLLFLSAISLIAGWLHLQPKWKPSVSWFKNAESRLNHHLSGLFGVSSLAWTGHLVHVAIPASRGEYVRWNNFLDVLPHPQGLGPLFTGQWNLYAQNPDSSSHLFGTAEGAGTAILTLLGGFHPQTQSLWLTDMAHHHLAIAFIFLVAGHMYRTNFGIGHSMKDLLDAHIPPGGRLGRGHKGLYDTINNSLHFQLGLALASLGVITSLVAQHMYSLPAYAFIAQDFTTQAALYTHHQYIAGFIMTGAFAHGAIFFIRDYNPEQNEDNVLARMLDHKEAIISHLSWASLFLGFHTLGLYVHNDVMLAFGTPEKQILIEPIFAQWIQSAHGKTSYGFDVLLSSTTGPAFNAGRSIWLPGWLNAVNENSNSLFLTIGPGDFLVHHAIALGLHTTTLILVKGALDARGSKLMPDKKDFGYSFPCDGPGRGGTCDISAWDAFYLAVFWMLNTIGWVTFYWHWKHITLWQGNVSQFNESSTYLMGWLRDYLWLNSSQLINGYNPFGMNSLSVWAWMFLFGHLVWATGFMFLISWRGYWQELIETLAWAHERTPLANLIRWRDKPVALSIVQARLVGLAHFSVGYIFTYAAFLIASTSGKFG.

Helical transmembrane passes span I46 to A69, L135 to Q158, L175 to I199, M273 to Y291, L330 to Y353, A369 to I395, A417 to H439, and F517 to V535. Residues C559 and C568 each contribute to the [4Fe-4S] cluster site. A run of 2 helical transmembrane segments spans residues A575–W596 and L643–I665. Chlorophyll a is bound by residues H654, M662, and Y670. Phylloquinone is bound at residue W671. Residues L707–A727 traverse the membrane as a helical segment.

This sequence belongs to the PsaA/PsaB family. As to quaternary structure, the PsaA/B heterodimer binds the P700 chlorophyll special pair and subsequent electron acceptors. PSI consists of a core antenna complex that captures photons, and an electron transfer chain that converts photonic excitation into a charge separation. The eukaryotic PSI reaction center is composed of at least 11 subunits. P700 is a chlorophyll a/chlorophyll a' dimer, A0 is one or more chlorophyll a, A1 is one or both phylloquinones and FX is a shared 4Fe-4S iron-sulfur center. is required as a cofactor.

The protein localises to the plastid. Its subcellular location is the chloroplast thylakoid membrane. The enzyme catalyses reduced [plastocyanin] + hnu + oxidized [2Fe-2S]-[ferredoxin] = oxidized [plastocyanin] + reduced [2Fe-2S]-[ferredoxin]. PsaA and PsaB bind P700, the primary electron donor of photosystem I (PSI), as well as the electron acceptors A0, A1 and FX. PSI is a plastocyanin-ferredoxin oxidoreductase, converting photonic excitation into a charge separation, which transfers an electron from the donor P700 chlorophyll pair to the spectroscopically characterized acceptors A0, A1, FX, FA and FB in turn. Oxidized P700 is reduced on the lumenal side of the thylakoid membrane by plastocyanin. The sequence is that of Photosystem I P700 chlorophyll a apoprotein A2 from Solanum tuberosum (Potato).